We begin with the raw amino-acid sequence, 242 residues long: Biosynthetic peptidoglycan transglycosylase (242 aa).

The helical transmembrane segment at 19–39 (ILAALAVFWGGGIALFSVVPV) threads the bilayer.

The protein belongs to the glycosyltransferase 51 family.

It is found in the cell inner membrane. It catalyses the reaction [GlcNAc-(1-&gt;4)-Mur2Ac(oyl-L-Ala-gamma-D-Glu-L-Lys-D-Ala-D-Ala)](n)-di-trans,octa-cis-undecaprenyl diphosphate + beta-D-GlcNAc-(1-&gt;4)-Mur2Ac(oyl-L-Ala-gamma-D-Glu-L-Lys-D-Ala-D-Ala)-di-trans,octa-cis-undecaprenyl diphosphate = [GlcNAc-(1-&gt;4)-Mur2Ac(oyl-L-Ala-gamma-D-Glu-L-Lys-D-Ala-D-Ala)](n+1)-di-trans,octa-cis-undecaprenyl diphosphate + di-trans,octa-cis-undecaprenyl diphosphate + H(+). It functions in the pathway cell wall biogenesis; peptidoglycan biosynthesis. In terms of biological role, peptidoglycan polymerase that catalyzes glycan chain elongation from lipid-linked precursors. The chain is Biosynthetic peptidoglycan transglycosylase from Salmonella typhi.